Consider the following 201-residue polypeptide: MEKTLIIATRNSGKTKEFKKLFADFGYEIKDLTDYPELSEIEETGTTFEENARLKAEQIAEITGQVVIGDDSGLCVDVLGGLPGIWSHRFSAPDPTDEKNIAKLLHELAPTAITPERRSAHFHTTLVAAKPGRESLVVEADWDGYIALAPKGENGFGYDPIFMVDAFRTAAELSEKEKNQVSHRGQALRKLMAELPEWLYK.

9–14 (TRNSGK) contacts substrate. Glu-42 and Asp-71 together coordinate Mg(2+). Asp-71 functions as the Proton acceptor in the catalytic mechanism. Substrate contacts are provided by residues Ser-72, 156-159 (FGYD), Lys-178, and 183-184 (HR).

This sequence belongs to the HAM1 NTPase family. As to quaternary structure, homodimer. Mg(2+) is required as a cofactor.

The enzyme catalyses XTP + H2O = XMP + diphosphate + H(+). It carries out the reaction dITP + H2O = dIMP + diphosphate + H(+). The catalysed reaction is ITP + H2O = IMP + diphosphate + H(+). Pyrophosphatase that catalyzes the hydrolysis of nucleoside triphosphates to their monophosphate derivatives, with a high preference for the non-canonical purine nucleotides XTP (xanthosine triphosphate), dITP (deoxyinosine triphosphate) and ITP. Seems to function as a house-cleaning enzyme that removes non-canonical purine nucleotides from the nucleotide pool, thus preventing their incorporation into DNA/RNA and avoiding chromosomal lesions. In Lactococcus lactis subsp. lactis (strain IL1403) (Streptococcus lactis), this protein is dITP/XTP pyrophosphatase (ynbD).